The following is a 530-amino-acid chain: MATPDVSVHMEEVVVVTTPDTAVDGSGVEGVKTVLVTTNLAPHGGDLTEDNMETENAAAAAAAAFTASSQLKEAVLVKMAEEGENLEAEIVYPITCGDSRANLIWRKFVCPGINVKCVQYDEHVISPKEFVHLAGKSTLKDWKRAIRMNGIMLRKIMDSGELDFYQHDKVCSNTCRSTKIDLSGARVSLSSPTSAEYIPLTPAAADVNGSPATITIETCEDPGDWTAAIGDDTFTFWRGLKDAGLLDEVIQEFHQELVETMRGLQQRVQDPPLQLRDAVLLNNIVQNFGMLDLVKKVLASHKCQMDRSREQYARDLAALEQQCDEHRRRAKELKHKSQHLSNVLMTLTPVSLPPPVKRPRLARATSGPAAMASQVLTQSAQLALGPGVPVPQLTSVPLGKVVSTLPSTVLGKGSLQAPPASSPASPLLGGYTVLASSGSTYPSTVEIHPDASSLTVLSTAAVQDGSTVFKVVSPLQLLTLPGLGPTLQNVAQASPGSSTIVTVPAGAAPGPEEHTATIEVAAMAEDHERK.

Positions 81–163 constitute an SAND domain; the sequence is EEGENLEAEI…RKIMDSGELD (83 aa). Position 110 (Cys-110) interacts with Zn(2+). DNA is bound by residues Lys-136, Lys-140, Lys-143, and Arg-154. Lys-155 is covalently cross-linked (Glycyl lysine isopeptide (Lys-Gly) (interchain with G-Cter in SUMO1); alternate). Lys-155 is covalently cross-linked (Glycyl lysine isopeptide (Lys-Gly) (interchain with G-Cter in SUMO2); alternate). Residues His-167, Cys-171, and Cys-175 each coordinate Zn(2+). Residues 304–348 adopt a coiled-coil conformation; the sequence is QMDRSREQYARDLAALEQQCDEHRRRAKELKHKSQHLSNVLMTLT. Ser-373 is subject to Phosphoserine.

As to quaternary structure, homodimer, and heterodimer of GMEB1 and GMEB2. GMEB1 and GMEB2 form the parvovirus initiator complex (PIF). Interacts with the glucocorticoid receptor (NR3C1). May interact with CREB-binding protein (CBP). Expressed in peripheral blood lymphocytes and fetal liver. Expressed preferentially in reproductive and/or developmentally important cells, such as testis, placenta, bone marrow and fetal tissues.

The protein resides in the nucleus. It localises to the cytoplasm. In terms of biological role, trans-acting factor that binds to glucocorticoid modulatory elements (GME) present in the TAT (tyrosine aminotransferase) promoter and increases sensitivity to low concentrations of glucocorticoids. Also binds to the transferrin receptor promoter. Essential auxiliary factor for the replication of parvoviruses. The sequence is that of Glucocorticoid modulatory element-binding protein 2 (GMEB2) from Homo sapiens (Human).